The primary structure comprises 75 residues: Stewaprin-a (75 aa).

A signal peptide spans 1-24 (MSSGGLLLLLGLLTLWAELIPVSG). The WAP domain occupies 27 to 72 (HPKKPGLCPPRPQKPPCVRECKNDWSCPGEQKCCRYGCIFECRDPI). Intrachain disulfides connect C34–C60, C43–C64, C47–C59, and C53–C68.

The protein belongs to the venom waprin family. Expressed by the venom gland.

The protein localises to the secreted. Damages membranes of susceptible bacteria. Has no hemolytic activity. Not toxic to mice. Does not inhibit the proteinases elastase and cathepsin G. The polypeptide is Stewaprin-a (Hoplocephalus stephensii (Stephens's banded snake)).